Reading from the N-terminus, the 519-residue chain is Putative ATP-dependent RNA helicase L396 (519 aa).

A Helicase ATP-binding domain is found at 110 to 258 (IKGMEEGGGG…IINWYMGPIL (149 aa)). 123 to 130 (MGCGSGKT) provides a ligand contact to ATP. A DEAH box motif is present at residues 211–214 (DEVH). One can recognise a Helicase C-terminal domain in the interval 317 to 457 (YLIQELFDMG…KQKYNIQKYY (141 aa)).

This sequence belongs to the DEAD box helicase family. DEAH subfamily.

The catalysed reaction is ATP + H2O = ADP + phosphate + H(+). The protein is Putative ATP-dependent RNA helicase L396 of Acanthamoeba polyphaga (Amoeba).